The following is a 437-amino-acid chain: Epsilon-sarcoglycan (437 aa).

Residues 1–317 lie on the Extracellular side of the membrane; the sequence is MQLPRWWELG…LKSRDYYTDF (317 aa). A glycan (N-linked (GlcNAc...) asparagine) is linked at N200. A helical transmembrane segment spans residues 318 to 338; the sequence is LITLAVPSAVALVLFLILAYI. Topologically, residues 339 to 437 are cytoplasmic; the sequence is MCCRREGVEK…QQQTTGKWYP (99 aa).

Belongs to the sarcoglycan alpha/epsilon family. N-glycosylated. In terms of processing, ubiquitinated, leading to its degradation by the proteasome.

It localises to the cell membrane. The protein resides in the sarcolemma. The protein localises to the cytoplasm. Its subcellular location is the cytoskeleton. It is found in the cell projection. It localises to the dendrite. The protein resides in the golgi apparatus. Its function is as follows. Component of the sarcoglycan complex, a subcomplex of the dystrophin-glycoprotein complex which forms a link between the F-actin cytoskeleton and the extracellular matrix. The protein is Epsilon-sarcoglycan of Macaca fascicularis (Crab-eating macaque).